The chain runs to 99 residues: NADH-quinone oxidoreductase subunit K (99 aa).

3 helical membrane passes run 3–23 (PENY…GVLL), 28–48 (IVVF…FVTF), and 62–82 (FFTM…IMII).

Belongs to the complex I subunit 4L family. As to quaternary structure, NDH-1 is composed of 14 different subunits. Subunits NuoA, H, J, K, L, M, N constitute the membrane sector of the complex.

The protein localises to the cell membrane. The enzyme catalyses a quinone + NADH + 5 H(+)(in) = a quinol + NAD(+) + 4 H(+)(out). Its function is as follows. NDH-1 shuttles electrons from NADH, via FMN and iron-sulfur (Fe-S) centers, to quinones in the respiratory chain. The immediate electron acceptor for the enzyme in this species is believed to be a menaquinone. Couples the redox reaction to proton translocation (for every two electrons transferred, four hydrogen ions are translocated across the cytoplasmic membrane), and thus conserves the redox energy in a proton gradient. The protein is NADH-quinone oxidoreductase subunit K of Rhodococcus erythropolis (strain PR4 / NBRC 100887).